A 122-amino-acid polypeptide reads, in one-letter code: Protein U68 (122 aa).

It belongs to the herpesviridae UL96 family.

The protein is Protein U68 of Elephas maximus (Indian elephant).